A 433-amino-acid polypeptide reads, in one-letter code: Dihydroorotase (433 aa).

Zn(2+)-binding residues include His63 and His65. Residues 65-67 (HLR) and Asn97 contribute to the substrate site. Positions 155, 182, and 235 each coordinate Zn(2+). A substrate-binding site is contributed by Asn283. A Zn(2+)-binding site is contributed by Asp310. The active site involves Asp310. His314 provides a ligand contact to substrate.

This sequence belongs to the metallo-dependent hydrolases superfamily. DHOase family. Class I DHOase subfamily. Requires Zn(2+) as cofactor.

The catalysed reaction is (S)-dihydroorotate + H2O = N-carbamoyl-L-aspartate + H(+). Its pathway is pyrimidine metabolism; UMP biosynthesis via de novo pathway; (S)-dihydroorotate from bicarbonate: step 3/3. In terms of biological role, catalyzes the reversible cyclization of carbamoyl aspartate to dihydroorotate. The protein is Dihydroorotase of Anaeromyxobacter sp. (strain K).